Reading from the N-terminus, the 1267-residue chain is MLVGQGAGLLGPAVVTAAVVLLLSGVGPAHGSEDIVVGCGGFVKSDVEINYSLIEIKLYTKHGTLKYQTDCAPNNGYFMIPLYDKGDFILKIEPPLGWSFEPTTVELHVDGVSDICTKGGDINFVFTGFSVNGKVLSKGQPLGPAGVQVSLRNTGTEAKIQSTVTQPGGKFAFFKVLPGDYEILATHPTWALKEASTTVRVTNSNANAASPLIVAGYNVSGSVRSDGEPMKGVKFLLFSSLVTKEDVLGCNVSPVPGFQPQDESLVYLCYTVSREDGSFSFYSLPSGGYTVIPFYRGERITFDVAPSRLDFTVEHDSLKIEPVFHVMGFSVTGRVLNGPEGDGVPEAVVTLNNQIKVKTKADGSFRLENITTGTYTIHAQKEHLYFETVTIKIAPNTPQLADIVATGFSVCGRISIIRFPDTVKQMNKYKVVLSSQDKDKSLVTVETDAHGSFCFKAKPGTYKVQVMVPEAETRAGLTLKPQTFPLTVTDRPVMDVAFVQFLASVSGKVSCLDTCGDLLVTLQSLSRQGEKRSLQLSGKVNAMTFTFDNVLPGKYKISIMHEDWCWKNKSLEVEVLEDDVSAVEFRQTGYMLRCSLSHAITLEFYQDGNGRENVGIYNLSKGVNRFCLSKPGVYKVTPRSCHRFEQAFYTYDTSSPSILTLTAIRHHVLGTITTDKMMDVTVTIKSSIDSEPALVLGPLKSVQELRREQQLAEIEARRQEREKNGNEEGEERMTKPPVQEMVDELQGPFSYDFSYWARSGEKITVTPSSKELLFYPPSMEAVVSGESCPGKLIEIHGKAGLFLEGQIHPELEGVEIVISEKGASSPLITVFTDDKGAYSVGPLHSDLEYTVTSQKEGYVLTAVEGTIGDFKAYALAGVSFEIKAEDDQPLPGVLLSLSGGLFRSNLLTQDNGILTFSNLSPGQYYFKPMMKEFRFEPSSQMIEVQEGQNLKITITGYRTAYSCYGTVSSLNGEPEQGVAMEAVGQNDCSIYGEDTVTDEEGKFRLRGLLPGCVYHVQLKAEGNDHIERALPHHRVIEVGNNDIDDVNIIVFRQINQFDLSGNVITSSEYLPTLWVKLYKSENLDNPIQTVSLGQSLFFHFPPLLRDGENYVVLLDSTLPRSQYDYILPQVSFTAVGYHKHITLIFNPTRKLPEQDIAQGSYIALPLTLLVLLAGYNHDKLIPLLLQLTSRLQGVGALGQAASDNSGPEDAKRQAKKQKTRRTLRLQEEFQLMWCLVPWRGTLGIHLFSSLPFASEILLETTATCIHY.

A signal peptide spans 1–31 (MLVGQGAGLLGPAVVTAAVVLLLSGVGPAHG). The Lumenal portion of the chain corresponds to 32 to 1155 (SEDIVVGCGG…NPTRKLPEQD (1124 aa)). N50, N218, and N618 each carry an N-linked (GlcNAc...) asparagine glycan. Residues 1156–1176 (IAQGSYIALPLTLLVLLAGYN) form a helical membrane-spanning segment. Residues 1177 to 1267 (HDKLIPLLLQ…LETTATCIHY (91 aa)) lie on the Cytoplasmic side of the membrane. Residues 1198–1219 (GQAASDNSGPEDAKRQAKKQKT) form a disordered region.

As to quaternary structure, component of the back of Sec61 (BOS) complex, composed of NCLN/Nicalin, NOMO (NOMO1, NOMO2 or NOMO3) and TMEM147. The BOS complex is part of the multi-pass translocon (MPT) complex, composed of three subcomplexes, the GEL complex (composed of RAB5IF/OPTI and TMCO1), the BOS complex (composed of NCLN/Nicalin, NOMO and TMEM147) and the PAT complex (composed of WDR83OS/Asterix and CCDC47). The MPT complex associates with the SEC61 complex. Due to the strong similarity between NOMO1, NOMO2 and NOMO3, similar interaction pattern probably occur for the three gene copies. As to expression, highly expressed in pancreas and skeletal muscle and, at lower levels, in heart.

It is found in the endoplasmic reticulum membrane. In terms of biological role, component of the multi-pass translocon (MPT) complex that mediates insertion of multi-pass membrane proteins into the lipid bilayer of membranes. The MPT complex takes over after the SEC61 complex: following membrane insertion of the first few transmembrane segments of proteins by the SEC61 complex, the MPT complex occludes the lateral gate of the SEC61 complex to promote insertion of subsequent transmembrane regions. This chain is BOS complex subunit NOMO2 (NOMO2), found in Homo sapiens (Human).